The following is a 245-amino-acid chain: tRNA pseudouridine synthase A (245 aa).

Asp52 (nucleophile) is an active-site residue. Tyr111 is a binding site for substrate.

It belongs to the tRNA pseudouridine synthase TruA family. In terms of assembly, homodimer.

The enzyme catalyses uridine(38/39/40) in tRNA = pseudouridine(38/39/40) in tRNA. In terms of biological role, formation of pseudouridine at positions 38, 39 and 40 in the anticodon stem and loop of transfer RNAs. This Rickettsia bellii (strain RML369-C) protein is tRNA pseudouridine synthase A.